The sequence spans 368 residues: Methionine import ATP-binding protein MetN (368 aa).

The span at 1–14 (MASDAQPSVDQPSA) shows a compositional bias: polar residues. Positions 1-27 (MASDAQPSVDQPSAGTPGATGNSTGTT) are disordered. Over residues 15 to 27 (GTPGATGNSTGTT) the composition is skewed to low complexity. The ABC transporter domain maps to 31-270 (IVFRDVTKIF…PQTKTAANFV (240 aa)). 67 to 74 (GYSGAGKS) contributes to the ATP binding site.

The protein belongs to the ABC transporter superfamily. Methionine importer (TC 3.A.1.24) family. As to quaternary structure, the complex is composed of two ATP-binding proteins (MetN), two transmembrane proteins (MetI) and a solute-binding protein (MetQ).

It is found in the cell membrane. The enzyme catalyses L-methionine(out) + ATP + H2O = L-methionine(in) + ADP + phosphate + H(+). It catalyses the reaction D-methionine(out) + ATP + H2O = D-methionine(in) + ADP + phosphate + H(+). Its function is as follows. Part of the ABC transporter complex MetNIQ involved in methionine import. Responsible for energy coupling to the transport system. This is Methionine import ATP-binding protein MetN from Corynebacterium jeikeium (strain K411).